The primary structure comprises 195 residues: MGGKQSSASRSRAPFPGVSSDDSAVPPSSNFGHFRGGGAMGLRSRSVSSVSGLDPPAAALPFGLYRAGPDTERGGGSGSEDSRGGLYLGSRASLADTLHITPRWIGAHSGFRCPICSKSVASDEMEMHFIMCLSKPRLSYNDDVLTRDAGECVICLEELSQGDTIARLPCLCIYHKSCIDSWFEVNRCCPEHPSD.

The span at 1–10 (MGGKQSSASR) shows a compositional bias: polar residues. The segment at 1–37 (MGGKQSSASRSRAPFPGVSSDDSAVPPSSNFGHFRGG) is disordered. G2 carries the N-myristoyl glycine lipid modification. Residues 18-29 (VSSDDSAVPPSS) show a composition bias toward low complexity. An RING-type; atypical zinc finger spans residues 152-193 (CVICLEELSQGDTIARLPCLCIYHKSCIDSWFEVNRCCPEHP).

Its subcellular location is the endosome. It localises to the lysosome. The protein localises to the membrane. The enzyme catalyses S-ubiquitinyl-[E2 ubiquitin-conjugating enzyme]-L-cysteine + [acceptor protein]-L-lysine = [E2 ubiquitin-conjugating enzyme]-L-cysteine + N(6)-ubiquitinyl-[acceptor protein]-L-lysine.. It participates in protein modification; protein ubiquitination. In terms of biological role, E3 ubiquitin-protein ligase that plays a role in neuron cells differentiation. Plays a role in the establishment and maintenance of neuronal transmission and plasticity. This is E3 ubiquitin-protein ligase ZNRF1 (znrf1) from Xenopus laevis (African clawed frog).